The primary structure comprises 551 residues: Palatinase (551 aa).

Asp201 serves as the catalytic Nucleophile. Glu243 (proton donor) is an active-site residue.

Belongs to the glycosyl hydrolase 13 family.

It carries out the reaction 6-O-alpha-D-glucopyranosyl-D-fructose + H2O = alpha-D-glucose + D-fructose. The protein operates within glycan degradation; palatinose degradation. Functionally, catalyzes the hydrolysis of palatinose. Shows a strict specificity toward palatinose, and cannot release glucose from the disaccharides sucrose, maltose, trehalose and melibiose. Involved in the degradation of palatinose, a sucrose isomer that is formed as a reserve material under conditions of excess carbon availability, sequestered in a form unavailable to competitors such as fungi or the host plant, and whose consumption appears to be postponed until the preferentially metabolized carbon source (e.g. sucrose) is depleted. In Erwinia rhapontici (Pectobacterium rhapontici), this protein is Palatinase.